The primary structure comprises 29 residues: Ranatuerin-2SEa (29 aa).

Cys23 and Cys29 are oxidised to a cystine.

Expressed by the skin glands.

Its subcellular location is the secreted. Its function is as follows. Mast cell degranulating peptide. Causes histamine release from rat peritoneal mast cells in vitro. Has antibacterial activity against the Gram-negative bacterium E.coli K12 and Gram-positive bacterium M.luteus NCT C2665. In Lithobates sevosus (Dusky gopher frog), this protein is Ranatuerin-2SEa.